A 112-amino-acid polypeptide reads, in one-letter code: Large ribosomal subunit protein bL17 (112 aa).

Belongs to the bacterial ribosomal protein bL17 family. In terms of assembly, part of the 50S ribosomal subunit. Contacts protein L32.

The chain is Large ribosomal subunit protein bL17 from Heliobacterium modesticaldum (strain ATCC 51547 / Ice1).